The following is a 206-amino-acid chain: ATP phosphoribosyltransferase (206 aa).

It belongs to the ATP phosphoribosyltransferase family. Short subfamily. Heteromultimer composed of HisG and HisZ subunits.

Its subcellular location is the cytoplasm. It carries out the reaction 1-(5-phospho-beta-D-ribosyl)-ATP + diphosphate = 5-phospho-alpha-D-ribose 1-diphosphate + ATP. Its pathway is amino-acid biosynthesis; L-histidine biosynthesis; L-histidine from 5-phospho-alpha-D-ribose 1-diphosphate: step 1/9. Catalyzes the condensation of ATP and 5-phosphoribose 1-diphosphate to form N'-(5'-phosphoribosyl)-ATP (PR-ATP). Has a crucial role in the pathway because the rate of histidine biosynthesis seems to be controlled primarily by regulation of HisG enzymatic activity. The chain is ATP phosphoribosyltransferase from Thermus thermophilus (strain ATCC 27634 / DSM 579 / HB8).